The sequence spans 602 residues: Transcription termination factor Rho (602 aa).

Disordered stretches follow at residues methionine 1 to glycine 35 and alanine 76 to glutamate 216. Over residues serine 85–proline 96 the composition is skewed to basic and acidic residues. The segment covering alanine 100–valine 120 has biased composition (polar residues). The span at glycine 172 to alanine 182 shows a compositional bias: low complexity. Basic and acidic residues predominate over residues arginine 183 to glutamine 192. Residues glycine 193 to glycine 206 are compositionally biased toward basic residues. Residues valine 223–serine 301 form the Rho RNA-BD domain. ATP is bound by residues glycine 344–alanine 349, lysine 356–threonine 361, and arginine 387.

It belongs to the Rho family. Homohexamer. The homohexamer assembles into an open ring structure.

Its function is as follows. Facilitates transcription termination by a mechanism that involves Rho binding to the nascent RNA, activation of Rho's RNA-dependent ATPase activity, and release of the mRNA from the DNA template. The sequence is that of Transcription termination factor Rho from Mycobacterium bovis (strain ATCC BAA-935 / AF2122/97).